Consider the following 440-residue polypeptide: ATP-dependent protease ATPase subunit HslU (440 aa).

ATP-binding positions include isoleucine 18, 60–65 (GVGKTE), aspartate 253, glutamate 318, and arginine 390.

This sequence belongs to the ClpX chaperone family. HslU subfamily. As to quaternary structure, a double ring-shaped homohexamer of HslV is capped on each side by a ring-shaped HslU homohexamer. The assembly of the HslU/HslV complex is dependent on binding of ATP.

The protein localises to the cytoplasm. Functionally, ATPase subunit of a proteasome-like degradation complex; this subunit has chaperone activity. The binding of ATP and its subsequent hydrolysis by HslU are essential for unfolding of protein substrates subsequently hydrolyzed by HslV. HslU recognizes the N-terminal part of its protein substrates and unfolds these before they are guided to HslV for hydrolysis. This chain is ATP-dependent protease ATPase subunit HslU, found in Shewanella oneidensis (strain ATCC 700550 / JCM 31522 / CIP 106686 / LMG 19005 / NCIMB 14063 / MR-1).